We begin with the raw amino-acid sequence, 601 residues long: Aspartate--tRNA(Asp/Asn) ligase (601 aa).

L-aspartate is bound at residue glutamate 174. The interval 198 to 201 (QLFK) is aspartate. Position 220 (arginine 220) interacts with L-aspartate. Residues 220–222 (RDE) and glutamine 229 each bind ATP. Histidine 459 is an L-aspartate binding site. Glutamate 493 is a binding site for ATP. Arginine 500 contacts L-aspartate. 545-548 (GLDR) contributes to the ATP binding site.

The protein belongs to the class-II aminoacyl-tRNA synthetase family. Type 1 subfamily. In terms of assembly, homodimer.

The protein localises to the cytoplasm. It carries out the reaction tRNA(Asx) + L-aspartate + ATP = L-aspartyl-tRNA(Asx) + AMP + diphosphate. Functionally, aspartyl-tRNA synthetase with relaxed tRNA specificity since it is able to aspartylate not only its cognate tRNA(Asp) but also tRNA(Asn). Reaction proceeds in two steps: L-aspartate is first activated by ATP to form Asp-AMP and then transferred to the acceptor end of tRNA(Asp/Asn). This is Aspartate--tRNA(Asp/Asn) ligase from Variovorax paradoxus (strain S110).